The chain runs to 204 residues: Thymidine kinase (204 aa).

ATP is bound by residues 23 to 30 (GSMFSGKT) and 95 to 98 (DEAQ). Glu-96 serves as the catalytic Proton acceptor. The Zn(2+) site is built by Cys-152, Cys-155, Cys-184, and Cys-187.

It belongs to the thymidine kinase family. In terms of assembly, homotetramer.

It localises to the cytoplasm. The catalysed reaction is thymidine + ATP = dTMP + ADP + H(+). The sequence is that of Thymidine kinase from Porphyromonas gingivalis (strain ATCC BAA-308 / W83).